The chain runs to 317 residues: Acetyl-coenzyme A carboxylase carboxyl transferase subunit alpha (317 aa).

The 255-residue stretch at 39–293 (RLETKAREAL…GDAIADALSQ (255 aa)) folds into the CoA carboxyltransferase C-terminal domain.

This sequence belongs to the AccA family. In terms of assembly, acetyl-CoA carboxylase is a heterohexamer composed of biotin carboxyl carrier protein (AccB), biotin carboxylase (AccC) and two subunits each of ACCase subunit alpha (AccA) and ACCase subunit beta (AccD).

The protein localises to the cytoplasm. The catalysed reaction is N(6)-carboxybiotinyl-L-lysyl-[protein] + acetyl-CoA = N(6)-biotinyl-L-lysyl-[protein] + malonyl-CoA. The protein operates within lipid metabolism; malonyl-CoA biosynthesis; malonyl-CoA from acetyl-CoA: step 1/1. In terms of biological role, component of the acetyl coenzyme A carboxylase (ACC) complex. First, biotin carboxylase catalyzes the carboxylation of biotin on its carrier protein (BCCP) and then the CO(2) group is transferred by the carboxyltransferase to acetyl-CoA to form malonyl-CoA. This is Acetyl-coenzyme A carboxylase carboxyl transferase subunit alpha from Xanthobacter autotrophicus (strain ATCC BAA-1158 / Py2).